The chain runs to 256 residues: L-erythrulose-1-phosphate isomerase (256 aa).

The active-site Electrophile is the His-96. Residue Glu-169 is the Proton acceptor of the active site. Substrate contacts are provided by Gly-175 and Ser-212.

The protein belongs to the triosephosphate isomerase family. As to quaternary structure, homodimer.

It localises to the cytoplasm. It catalyses the reaction L-erythrulose 1-phosphate = D-erythrulose 4-phosphate. Its pathway is carbohydrate metabolism; erythritol degradation. Catalyzes the isomerization of D-erythrulose-4P to L-erythrulose-1P. The sequence is that of L-erythrulose-1-phosphate isomerase from Brucella melitensis biotype 1 (strain ATCC 23456 / CCUG 17765 / NCTC 10094 / 16M).